A 201-amino-acid polypeptide reads, in one-letter code: Sorting nexin-10 (201 aa).

Positions 8–125 (EEFVSVWVRD…SLHLFLQSHL (118 aa)) are required for interaction with ATP6V1D. The PX domain maps to 10-127 (FVSVWVRDPR…HLFLQSHLNS (118 aa)). A 1,2-diacyl-sn-glycero-3-phospho-(1D-myo-inositol-3-phosphate) contacts are provided by arginine 53, lysine 79, and arginine 94. Positions 156–201 (FPEEDEEGKKENDIDYDSESSSSGLGHSSDDSSSHGCKVNTAPQES) are disordered.

This sequence belongs to the sorting nexin family. In terms of assembly, interacts with ATP6V1D; may play a role in ciliogenesis.

The protein localises to the cytoplasm. It is found in the endosome membrane. It localises to the cytoskeleton. The protein resides in the microtubule organizing center. Its subcellular location is the centrosome. Its function is as follows. Probable phosphoinositide-binding protein involved in protein sorting and membrane trafficking in endosomes. Plays a role in cilium biogenesis through regulation of the transport and the localization of proteins to the cilium. Required for the localization to the cilium of V-ATPase subunit ATP6V1D and ATP6V0D1, and RAB8A. Involved in osteoclast differentiation and therefore bone resorption. The protein is Sorting nexin-10 (SNX10) of Homo sapiens (Human).